The primary structure comprises 336 residues: Protein phosphatase 1 regulatory subunit pprA (336 aa).

Residues 1–10 are compositionally biased toward low complexity; it reads MSEQNTIINS. The interval 1–24 is disordered; that stretch reads MSEQNTIINSEEIKENEKIESETE. Over residues 11–21 the composition is skewed to basic and acidic residues; it reads EEIKENEKIES. 12 LRR repeats span residues 26–47, 49–70, 71–92, 93–114, 115–136, 139–160, 161–182, 183–204, 205–225, 229–250, 251–272, and 273–294; these read PITYLDLTGQPHTSIGDSYNIP, TLLDLDLTNCKITKIENINHLK, NLKKLCFRQNLIEKIENIDQLK, ELESLDLYDNKLQVIENIKDFQ, SLTYLDLSFNEIRIVENLSIKD, KIKELYLANNKITKIENLQELV, PIKNLELGSNRLREIENLENLV, NIETLWLGRNKITEIKGINHLS, HLRILSLQSNRLTEIGVKGLV, CLEELYLSHNGITDIDGLQSLK, QLRTLDISANKIKTLVGLNELP, and DLDEIWCNDNLVDSMDNIEQQV. Positions 306–336 constitute an LRRCT domain; sequence NPVATHVQYRRMFINMFPQLKQLDATMVKRN.

Belongs to the SDS22 family.

It localises to the nucleus. In terms of biological role, regulatory subunit of protein phosphatase 1. The protein is Protein phosphatase 1 regulatory subunit pprA (pprA) of Dictyostelium discoideum (Social amoeba).